The primary structure comprises 143 residues: Large ribosomal subunit protein uL11 (143 aa).

This sequence belongs to the universal ribosomal protein uL11 family. Part of the ribosomal stalk of the 50S ribosomal subunit. Interacts with L10 and the large rRNA to form the base of the stalk. L10 forms an elongated spine to which L12 dimers bind in a sequential fashion forming a multimeric L10(L12)X complex. In terms of processing, one or more lysine residues are methylated.

In terms of biological role, forms part of the ribosomal stalk which helps the ribosome interact with GTP-bound translation factors. This chain is Large ribosomal subunit protein uL11, found in Clavibacter michiganensis subsp. michiganensis (strain NCPPB 382).